Reading from the N-terminus, the 360-residue chain is Serine/threonine transporter SstT (360 aa).

A run of 9 helical transmembrane segments spans residues 17-37 (IGIG…ITVI), 40-60 (FGSL…LTLV), 78-98 (VICL…GASY), 138-158 (ALAT…GLAF), 179-199 (VVGW…FDTI), 212-232 (LLLL…NPLI), 295-315 (MAGA…TLGI), 316-336 (SVDF…AAGA), and 339-359 (VAGG…VPYV).

The protein belongs to the dicarboxylate/amino acid:cation symporter (DAACS) (TC 2.A.23) family.

Its subcellular location is the cell membrane. The catalysed reaction is L-serine(in) + Na(+)(in) = L-serine(out) + Na(+)(out). It catalyses the reaction L-threonine(in) + Na(+)(in) = L-threonine(out) + Na(+)(out). Involved in the import of serine and threonine into the cell, with the concomitant import of sodium (symport system). The polypeptide is Serine/threonine transporter SstT (Streptococcus suis (strain 05ZYH33)).